The following is a 669-amino-acid chain: DNA ligase (669 aa).

NAD(+) is bound by residues 33–37 (DVTYD), 82–83 (SL), and Glu-115. The active-site N6-AMP-lysine intermediate is Lys-117. 4 residues coordinate NAD(+): Arg-138, Glu-172, Lys-286, and Lys-310. 4 residues coordinate Zn(2+): Cys-401, Cys-404, Cys-417, and Cys-422. Residues 589–669 (VDSSFLFGKK…DIKNLVNLDD (81 aa)) enclose the BRCT domain.

It belongs to the NAD-dependent DNA ligase family. LigA subfamily. Mg(2+) is required as a cofactor. Mn(2+) serves as cofactor.

It carries out the reaction NAD(+) + (deoxyribonucleotide)n-3'-hydroxyl + 5'-phospho-(deoxyribonucleotide)m = (deoxyribonucleotide)n+m + AMP + beta-nicotinamide D-nucleotide.. In terms of biological role, DNA ligase that catalyzes the formation of phosphodiester linkages between 5'-phosphoryl and 3'-hydroxyl groups in double-stranded DNA using NAD as a coenzyme and as the energy source for the reaction. It is essential for DNA replication and repair of damaged DNA. In Borrelia duttonii (strain Ly), this protein is DNA ligase.